The following is a 340-amino-acid chain: Glycerol-3-phosphate dehydrogenase [NAD(P)+] (340 aa).

Serine 14, phenylalanine 15, arginine 35, and lysine 108 together coordinate NADPH. Residues lysine 108 and glycine 136 each contribute to the sn-glycerol 3-phosphate site. An NADPH-binding site is contributed by alanine 140. Sn-glycerol 3-phosphate contacts are provided by lysine 191, aspartate 244, serine 254, arginine 255, and asparagine 256. Catalysis depends on lysine 191, which acts as the Proton acceptor. Arginine 255 contributes to the NADPH binding site. Residues valine 279 and glutamate 281 each contribute to the NADPH site.

It belongs to the NAD-dependent glycerol-3-phosphate dehydrogenase family.

The protein resides in the cytoplasm. It carries out the reaction sn-glycerol 3-phosphate + NAD(+) = dihydroxyacetone phosphate + NADH + H(+). It catalyses the reaction sn-glycerol 3-phosphate + NADP(+) = dihydroxyacetone phosphate + NADPH + H(+). Its pathway is membrane lipid metabolism; glycerophospholipid metabolism. Catalyzes the reduction of the glycolytic intermediate dihydroxyacetone phosphate (DHAP) to sn-glycerol 3-phosphate (G3P), the key precursor for phospholipid synthesis. The chain is Glycerol-3-phosphate dehydrogenase [NAD(P)+] from Ectopseudomonas mendocina (strain ymp) (Pseudomonas mendocina).